The primary structure comprises 202 residues: ATP-dependent Clp protease proteolytic subunit 3 (202 aa).

Serine 93 acts as the Nucleophile in catalysis. The active site involves histidine 118.

Belongs to the peptidase S14 family. In terms of assembly, fourteen ClpP subunits assemble into 2 heptameric rings which stack back to back to give a disk-like structure with a central cavity, resembling the structure of eukaryotic proteasomes.

The protein localises to the cytoplasm. The enzyme catalyses Hydrolysis of proteins to small peptides in the presence of ATP and magnesium. alpha-casein is the usual test substrate. In the absence of ATP, only oligopeptides shorter than five residues are hydrolyzed (such as succinyl-Leu-Tyr-|-NHMec, and Leu-Tyr-Leu-|-Tyr-Trp, in which cleavage of the -Tyr-|-Leu- and -Tyr-|-Trp bonds also occurs).. In terms of biological role, cleaves peptides in various proteins in a process that requires ATP hydrolysis. Has a chymotrypsin-like activity. Plays a major role in the degradation of misfolded proteins. This chain is ATP-dependent Clp protease proteolytic subunit 3, found in Rhodococcus jostii (strain RHA1).